We begin with the raw amino-acid sequence, 216 residues long: Histidine biosynthesis bifunctional protein HisIE (216 aa).

Residues 1-127 form a phosphoribosyl-AMP cyclohydrolase region; it reads MSFIDSLSPQ…GKIVAPPGDT (127 aa). The phosphoribosyl-ATP pyrophosphohydrolase stretch occupies residues 128-216; that stretch reads LSQVFQVICD…VYRKLQERRR (89 aa).

The protein in the N-terminal section; belongs to the PRA-CH family. In the C-terminal section; belongs to the PRA-PH family.

The protein resides in the cytoplasm. The catalysed reaction is 1-(5-phospho-beta-D-ribosyl)-ATP + H2O = 1-(5-phospho-beta-D-ribosyl)-5'-AMP + diphosphate + H(+). The enzyme catalyses 1-(5-phospho-beta-D-ribosyl)-5'-AMP + H2O = 1-(5-phospho-beta-D-ribosyl)-5-[(5-phospho-beta-D-ribosylamino)methylideneamino]imidazole-4-carboxamide. Its pathway is amino-acid biosynthesis; L-histidine biosynthesis; L-histidine from 5-phospho-alpha-D-ribose 1-diphosphate: step 2/9. The protein operates within amino-acid biosynthesis; L-histidine biosynthesis; L-histidine from 5-phospho-alpha-D-ribose 1-diphosphate: step 3/9. This chain is Histidine biosynthesis bifunctional protein HisIE (hisI), found in Nostoc sp. (strain PCC 7120 / SAG 25.82 / UTEX 2576).